The primary structure comprises 277 residues: Probable diphthine methyl ester synthase (277 aa).

S-adenosyl-L-methionine-binding positions include Leu-9, Asp-89, Gly-92, 117–118 (SV), Leu-168, Leu-227, and His-252.

Belongs to the diphthine synthase family.

The catalysed reaction is 2-[(3S)-amino-3-carboxypropyl]-L-histidyl-[translation elongation factor 2] + 4 S-adenosyl-L-methionine = diphthine methyl ester-[translation elongation factor 2] + 4 S-adenosyl-L-homocysteine + 3 H(+). The protein operates within protein modification; peptidyl-diphthamide biosynthesis. Its function is as follows. S-adenosyl-L-methionine-dependent methyltransferase that catalyzes four methylations of the modified target histidine residue in translation elongation factor 2 (EF-2), to form an intermediate called diphthine methyl ester. The four successive methylation reactions represent the second step of diphthamide biosynthesis. The polypeptide is Probable diphthine methyl ester synthase (Arabidopsis thaliana (Mouse-ear cress)).